A 420-amino-acid chain; its full sequence is Glucose-1-phosphate adenylyltransferase (420 aa).

Alpha-D-glucose 1-phosphate-binding positions include tyrosine 107, glycine 172, 187 to 188 (EK), and serine 205.

It belongs to the bacterial/plant glucose-1-phosphate adenylyltransferase family. Homotetramer.

It catalyses the reaction alpha-D-glucose 1-phosphate + ATP + H(+) = ADP-alpha-D-glucose + diphosphate. The protein operates within glycan biosynthesis; glycogen biosynthesis. Involved in the biosynthesis of ADP-glucose, a building block required for the elongation reactions to produce glycogen. Catalyzes the reaction between ATP and alpha-D-glucose 1-phosphate (G1P) to produce pyrophosphate and ADP-Glc. The sequence is that of Glucose-1-phosphate adenylyltransferase from Rhizobium meliloti (strain 1021) (Ensifer meliloti).